The chain runs to 466 residues: Cysteine--tRNA ligase (466 aa).

Residue C28 participates in Zn(2+) binding. A 'HIGH' region motif is present at residues 30-40; the sequence is PTVYNYIHIGN. Zn(2+) is bound by residues C208, H233, and E237. The 'KMSKS' region signature appears at 265–269; it reads KMSKS. An ATP-binding site is contributed by K268.

This sequence belongs to the class-I aminoacyl-tRNA synthetase family. As to quaternary structure, monomer. The cofactor is Zn(2+).

It is found in the cytoplasm. It carries out the reaction tRNA(Cys) + L-cysteine + ATP = L-cysteinyl-tRNA(Cys) + AMP + diphosphate. This is Cysteine--tRNA ligase from Staphylococcus aureus (strain USA300).